A 323-amino-acid chain; its full sequence is Phospho-N-acetylmuramoyl-pentapeptide-transferase (323 aa).

9 helical membrane-spanning segments follow: residues 12-32 (IVMAIVISFIVASILGPIIIP), 58-78 (PTIGGLIFIFATIITMFVMVG), 84-104 (AMIALYSFVGFGFVGFLDDLL), 120-140 (MILLLIISGFLTWYAYKYIGT), 151-171 (INLGLFYIPAAMFYFAGVTNA), 177-197 (GLDGLATSVTVLVTTFLGIIS), 200-220 (LGHISLAIFCVALAGALLAFL), 229-250 (VFMGDTGSLALGGAVAMVALIL), and 303-323 (KIVSVFSIITVVFCFIAFASL).

It belongs to the glycosyltransferase 4 family. MraY subfamily. The cofactor is Mg(2+).

It localises to the cell membrane. The enzyme catalyses UDP-N-acetyl-alpha-D-muramoyl-L-alanyl-gamma-D-glutamyl-meso-2,6-diaminopimeloyl-D-alanyl-D-alanine + di-trans,octa-cis-undecaprenyl phosphate = di-trans,octa-cis-undecaprenyl diphospho-N-acetyl-alpha-D-muramoyl-L-alanyl-D-glutamyl-meso-2,6-diaminopimeloyl-D-alanyl-D-alanine + UMP. It functions in the pathway cell wall biogenesis; peptidoglycan biosynthesis. Functionally, catalyzes the initial step of the lipid cycle reactions in the biosynthesis of the cell wall peptidoglycan: transfers peptidoglycan precursor phospho-MurNAc-pentapeptide from UDP-MurNAc-pentapeptide onto the lipid carrier undecaprenyl phosphate, yielding undecaprenyl-pyrophosphoryl-MurNAc-pentapeptide, known as lipid I. The chain is Phospho-N-acetylmuramoyl-pentapeptide-transferase from Clostridium perfringens (strain SM101 / Type A).